Here is a 245-residue protein sequence, read N- to C-terminus: Octopine transport system permease protein OccM (245 aa).

Transmembrane regions (helical) follow at residues Phe12–Val32, Phe57–Gly77, Ala96–Met116, Val163–Ile183, and Ala199–Ile219. Residues Ile19–Phe216 enclose the ABC transmembrane type-1 domain.

It belongs to the binding-protein-dependent transport system permease family. HisMQ subfamily.

The protein resides in the cell inner membrane. In terms of biological role, component of the octopine active transport system probably consisting of four subunits: Q, M, P and T. This chain is Octopine transport system permease protein OccM (occM), found in Rhizobium meliloti (Ensifer meliloti).